The primary structure comprises 516 residues: Cytochrome P450 1A2 (516 aa).

An O-linked (GlcNAc) serine glycan is attached at Ser69. Residue Phe226 coordinates substrate. Cys458 is a binding site for heme.

This sequence belongs to the cytochrome P450 family. As to quaternary structure, interacts with PGRMC1; the interaction requires PGRMC1 homodimerization. It depends on heme as a cofactor.

It localises to the endoplasmic reticulum membrane. The protein localises to the microsome membrane. It catalyses the reaction an organic molecule + reduced [NADPH--hemoprotein reductase] + O2 = an alcohol + oxidized [NADPH--hemoprotein reductase] + H2O + H(+). The enzyme catalyses 17beta-estradiol + reduced [NADPH--hemoprotein reductase] + O2 = 2-hydroxy-17beta-estradiol + oxidized [NADPH--hemoprotein reductase] + H2O + H(+). The catalysed reaction is 17beta-estradiol + reduced [NADPH--hemoprotein reductase] + O2 = 4-hydroxy-17beta-estradiol + oxidized [NADPH--hemoprotein reductase] + H2O + H(+). It carries out the reaction estrone + reduced [NADPH--hemoprotein reductase] + O2 = 2-hydroxyestrone + oxidized [NADPH--hemoprotein reductase] + H2O + H(+). It catalyses the reaction estrone + reduced [NADPH--hemoprotein reductase] + O2 = 4-hydroxyestrone + oxidized [NADPH--hemoprotein reductase] + H2O + H(+). The enzyme catalyses cholesterol + reduced [NADPH--hemoprotein reductase] + O2 = 25-hydroxycholesterol + oxidized [NADPH--hemoprotein reductase] + H2O + H(+). The catalysed reaction is all-trans-retinol + reduced [NADPH--hemoprotein reductase] + O2 = all-trans-retinal + oxidized [NADPH--hemoprotein reductase] + 2 H2O + H(+). It carries out the reaction all-trans-retinal + reduced [NADPH--hemoprotein reductase] + O2 = all-trans-retinoate + oxidized [NADPH--hemoprotein reductase] + H2O + 2 H(+). It catalyses the reaction (5Z,8Z,11Z,14Z)-eicosatetraenoate + reduced [NADPH--hemoprotein reductase] + O2 = (14R,15S)-epoxy-(5Z,8Z,11Z)-eicosatrienoate + oxidized [NADPH--hemoprotein reductase] + H2O + H(+). The enzyme catalyses (5Z,8Z,11Z,14Z)-eicosatetraenoate + reduced [NADPH--hemoprotein reductase] + O2 = (14S,15R)-epoxy-(5Z,8Z,11Z)-eicosatrienoate + oxidized [NADPH--hemoprotein reductase] + H2O + H(+). The catalysed reaction is (5Z,8Z,11Z,14Z,17Z)-eicosapentaenoate + reduced [NADPH--hemoprotein reductase] + O2 = (17R,18S)-epoxy-(5Z,8Z,11Z,14Z)-eicosatetraenoate + oxidized [NADPH--hemoprotein reductase] + H2O + H(+). It carries out the reaction (4Z,7Z,10Z,13Z,16Z,19Z)-docosahexaenoate + reduced [NADPH--hemoprotein reductase] + O2 = (19R,20S)-epoxy-(4Z,7Z,10Z,13Z,16Z)-docosapentaenoate + oxidized [NADPH--hemoprotein reductase] + H2O + H(+). It catalyses the reaction (5S)-hydroperoxy-(6E,8Z,11Z,14Z)-eicosatetraenoate = 5-oxo-(6E,8Z,11Z,14Z)-eicosatetraenoate + H2O. The enzyme catalyses (12S)-hydroperoxy-(5Z,8Z,10E,14Z)-eicosatetraenoate = 12-oxo-(5Z,8Z,10E,14Z)-eicosatetraenoate + H2O. The catalysed reaction is (15S)-hydroperoxy-(5Z,8Z,11Z,13E)-eicosatetraenoate = 15-oxo-(5Z,8Z,11Z,13E)-eicosatetraenoate + H2O. It carries out the reaction (13S)-hydroperoxy-(9Z,11E)-octadecadienoate = 13-oxo-(9Z,11E)-octadecadienoate + H2O. It catalyses the reaction (5Z,8Z,11Z,14Z)-eicosatetraenoate + reduced [NADPH--hemoprotein reductase] + O2 = 13-hydroxy-(5Z,8Z,11Z,14Z)-eicosatetraenoate + oxidized [NADPH--hemoprotein reductase] + H2O + H(+). The enzyme catalyses (5Z,8Z,11Z,14Z)-eicosatetraenoate + reduced [NADPH--hemoprotein reductase] + O2 = 19-hydroxy-(5Z,8Z,11Z,14Z)-eicosatetraenoate + oxidized [NADPH--hemoprotein reductase] + H2O + H(+). The catalysed reaction is (9Z,12Z)-octadecadienoate + reduced [NADPH--hemoprotein reductase] + O2 = 11-hydroxy-(9Z,12Z)-octadecadienoate + oxidized [NADPH--hemoprotein reductase] + H2O + H(+). It participates in cofactor metabolism; retinol metabolism. The protein operates within steroid metabolism; cholesterol metabolism. It functions in the pathway lipid metabolism; arachidonate metabolism. A cytochrome P450 monooxygenase involved in the metabolism of various endogenous substrates, including fatty acids, steroid hormones and vitamins. Mechanistically, uses molecular oxygen inserting one oxygen atom into a substrate, and reducing the second into a water molecule, with two electrons provided by NADPH via cytochrome P450 reductase (NADPH--hemoprotein reductase). Catalyzes the hydroxylation of carbon-hydrogen bonds. Exhibits high catalytic activity for the formation of hydroxyestrogens from estrone (E1) and 17beta-estradiol (E2), namely 2-hydroxy E1 and E2. Metabolizes cholesterol toward 25-hydroxycholesterol, a physiological regulator of cellular cholesterol homeostasis. May act as a major enzyme for all-trans retinoic acid biosynthesis in the liver. Catalyzes two successive oxidative transformation of all-trans retinol to all-trans retinal and then to the active form all-trans retinoic acid. Primarily catalyzes stereoselective epoxidation of the last double bond of polyunsaturated fatty acids (PUFA), displaying a strong preference for the (R,S) stereoisomer. Catalyzes bisallylic hydroxylation and omega-1 hydroxylation of PUFA. May also participate in eicosanoids metabolism by converting hydroperoxide species into oxo metabolites (lipoxygenase-like reaction, NADPH-independent). Plays a role in the oxidative metabolism of xenobiotics. Catalyzes the N-hydroxylation of heterocyclic amines and the O-deethylation of phenacetin. Metabolizes caffeine via N3-demethylation. The protein is Cytochrome P450 1A2 (CYP1A2) of Macaca fuscata fuscata (Japanese macaque).